Here is a 569-residue protein sequence, read N- to C-terminus: Retrotransposon Gag-like protein 5 (569 aa).

2 disordered regions span residues 115–151 and 323–506; these read DGPA…LERP and RNII…PSRR. The span at 117–146 shows a compositional bias: pro residues; the sequence is PADPPLLPIPPPPALPPPASKEPPPQPPLA. Over residues 334–350 the composition is skewed to acidic residues; that stretch reads NEEESEDEEYYSEDEDQ. Positions 353–367 are enriched in basic residues; that stretch reads RRHRLHSKDQRKRMR. Composition is skewed to basic and acidic residues over residues 372–392 and 401–415; these read EMKE…KKEE and MKQK…NKNE. Composition is skewed to acidic residues over residues 416 to 429 and 443 to 469; these read EEGE…EDED and GTEE…ELME. Polar residues predominate over residues 476 to 485; the sequence is HASSQTSGPT.

In Homo sapiens (Human), this protein is Retrotransposon Gag-like protein 5.